An 819-amino-acid chain; its full sequence is Eukaryotic translation initiation factor 3 subunit C (819 aa).

The segment at methionine 1–lysine 106 is disordered. Acidic residues-rich tracts occupy residues glycine 17–aspartate 41 and aspartate 47–aspartate 59. In terms of domain architecture, PCI spans phenylalanine 620–glutamate 795.

This sequence belongs to the eIF-3 subunit C family. Component of the eukaryotic translation initiation factor 3 (eIF-3) complex.

Its subcellular location is the cytoplasm. Component of the eukaryotic translation initiation factor 3 (eIF-3) complex, which is involved in protein synthesis of a specialized repertoire of mRNAs and, together with other initiation factors, stimulates binding of mRNA and methionyl-tRNAi to the 40S ribosome. The eIF-3 complex specifically targets and initiates translation of a subset of mRNAs involved in cell proliferation. The chain is Eukaryotic translation initiation factor 3 subunit C from Kluyveromyces lactis (strain ATCC 8585 / CBS 2359 / DSM 70799 / NBRC 1267 / NRRL Y-1140 / WM37) (Yeast).